The sequence spans 296 residues: 4-diphosphocytidyl-2-C-methyl-D-erythritol kinase (296 aa).

The active site involves K18. 102–112 serves as a coordination point for ATP; it reads PMGGGIGGGSS. D144 is an active-site residue.

The protein belongs to the GHMP kinase family. IspE subfamily.

It catalyses the reaction 4-CDP-2-C-methyl-D-erythritol + ATP = 4-CDP-2-C-methyl-D-erythritol 2-phosphate + ADP + H(+). It participates in isoprenoid biosynthesis; isopentenyl diphosphate biosynthesis via DXP pathway; isopentenyl diphosphate from 1-deoxy-D-xylulose 5-phosphate: step 3/6. In terms of biological role, catalyzes the phosphorylation of the position 2 hydroxy group of 4-diphosphocytidyl-2C-methyl-D-erythritol. The chain is 4-diphosphocytidyl-2-C-methyl-D-erythritol kinase from Vibrio atlanticus (strain LGP32) (Vibrio splendidus (strain Mel32)).